A 263-amino-acid chain; its full sequence is Post-GPI attachment to proteins factor 2 (263 aa).

6 helical membrane-spanning segments follow: residues 16–36, 69–89, 109–129, 143–163, 180–200, and 208–228; these read FVFC…LLSL, YIWR…AVAF, FLCN…LALT, CFGG…WLFS, YKIL…YLYW, and PGIY…NIFF.

Belongs to the PGAP2 family.

It is found in the golgi apparatus membrane. The protein resides in the endoplasmic reticulum membrane. In terms of biological role, involved in the lipid remodeling steps of GPI-anchor maturation. Required for stable expression of GPI-anchored proteins at the cell surface. This Caenorhabditis briggsae protein is Post-GPI attachment to proteins factor 2.